The primary structure comprises 889 residues: A disintegrin and metalloproteinase with thrombospondin motifs 8 (889 aa).

The signal sequence occupies residues 1 to 26; it reads MLPAPAAPRWPPLLLLLLLLLPLARG. A propeptide spanning residues 27–213 is cleaved from the precursor; the sequence is APARPAAGGQ…PLGATSRTKR (187 aa). A disordered region spans residues 138-210; the sequence is QGAGGSLAQP…PPPPLGATSR (73 aa). A compositionally biased stretch (basic and acidic residues) spans 173 to 183; the sequence is EGQRQERGDHQ. Positions 184 to 197 are enriched in acidic residues; sequence EDSEEESQEEEAEG. One can recognise a Peptidase M12B domain in the interval 219–429; it reads RFVETLLVAD…GHGDCLLDAP (211 aa). 11 disulfides stabilise this stretch: Cys-294/Cys-347, Cys-323/Cys-329, Cys-341/Cys-424, Cys-379/Cys-408, Cys-452/Cys-477, Cys-463/Cys-486, Cys-472/Cys-507, Cys-501/Cys-512, Cys-538/Cys-575, Cys-542/Cys-580, and Cys-553/Cys-565. Asn-344 is a glycosylation site (N-linked (GlcNAc...) asparagine). His-363 serves as a coordination point for Zn(2+). Glu-364 is an active-site residue. His-367 and His-373 together coordinate Zn(2+). Residues Asn-400, Asn-465, and Asn-490 are each glycosylated (N-linked (GlcNAc...) asparagine). In terms of domain architecture, Disintegrin spans 438–525; that stretch reads GLPGRMALYQ…EEVERPKPVA (88 aa). The TSP type-1 1 domain maps to 526 to 581; the sequence is DGGWAPWGPWGECSRTCGGGVQFSHRECKDPEPQNGGRYCLGRRAKYQSCHTEECP. N-linked (GlcNAc...) asparagine glycosylation is present at Asn-599. The spacer stretch occupies residues 690–831; it reads RKVSGSLTPT…RATTNIIQPL (142 aa). The TSP type-1 2 domain occupies 833 to 888; sequence HAQWVLGDWSECSSTCGAGWQRRTVECRDPSGQASATCNKALKPEDAKPCESQLCP.

Zn(2+) is required as a cofactor. In terms of processing, the precursor is cleaved by a furin endopeptidase. Post-translationally, glycosylated. Can be O-fucosylated by POFUT2 on a serine or a threonine residue found within the consensus sequence C1-X(2)-(S/T)-C2-G of the TSP type-1 repeat domains where C1 and C2 are the first and second cysteine residue of the repeat, respectively. Fucosylated repeats can then be further glycosylated by the addition of a beta-1,3-glucose residue by the glucosyltransferase, B3GALTL. Fucosylation mediates the efficient secretion of ADAMTS family members. Can also be C-glycosylated with one or two mannose molecules on tryptophan residues within the consensus sequence W-X-X-W of the TPRs, and N-glycosylated. These other glycosylations can also facilitate secretion. In terms of tissue distribution, highly expressed in adult and fetal lung, lower expression in brain, placenta, heart, stomach and fetal brain and kidney.

It localises to the secreted. Its subcellular location is the extracellular space. The protein localises to the extracellular matrix. Has anti-angiogenic properties. The protein is A disintegrin and metalloproteinase with thrombospondin motifs 8 (ADAMTS8) of Homo sapiens (Human).